The chain runs to 157 residues: Cyclic pyranopterin monophosphate synthase (157 aa).

Residues 75–77 and 111–112 each bind substrate; these read LCH and ME. Aspartate 126 is an active-site residue.

The protein belongs to the MoaC family. As to quaternary structure, homohexamer; trimer of dimers.

The enzyme catalyses (8S)-3',8-cyclo-7,8-dihydroguanosine 5'-triphosphate = cyclic pyranopterin phosphate + diphosphate. The protein operates within cofactor biosynthesis; molybdopterin biosynthesis. In terms of biological role, catalyzes the conversion of (8S)-3',8-cyclo-7,8-dihydroguanosine 5'-triphosphate to cyclic pyranopterin monophosphate (cPMP). In Novosphingobium aromaticivorans (strain ATCC 700278 / DSM 12444 / CCUG 56034 / CIP 105152 / NBRC 16084 / F199), this protein is Cyclic pyranopterin monophosphate synthase.